We begin with the raw amino-acid sequence, 969 residues long: Poly(ADP-ribose) glycohydrolase (969 aa).

3 disordered regions span residues 1–149 (MSAG…QQQT), 161–341 (HAEQ…CQAR), and 368–400 (NNAGTSDLNAKPSGNSSSLNVECRSSKQHGKRD). The segment at 1–449 (MSAGPGWEPC…LPPEKKWLGT (449 aa)) is A-domain. The Nuclear localization signal signature appears at 10–16 (CTKRPRW). The segment covering 69 to 84 (NATSFVFKQKTITTWM) has biased composition (polar residues). The short motif at 77 to 84 (QKTITTWM) is the PIP-box (PCNA interacting peptide) element. The span at 87-100 (KGPKTAESESKENN) shows a compositional bias: basic and acidic residues. Residues 101-113 (NTRIDSMMSSVQK) are compositionally biased toward polar residues. Residues 116–125 (FYPHKVEKLE) show a composition bias toward basic and acidic residues. Polar residues-rich tracts occupy residues 128 to 149 (PQLNLDKSPTEKSSQYLNQQQT) and 179 to 189 (QLSNANIGQSP). Ser135 is subject to Phosphoserine. A Phosphothreonine modification is found at Thr137. Residues 190 to 205 (HTDDHSDTDHEEDRDN) are compositionally biased toward basic and acidic residues. A Phosphoserine modification is found at Ser195. Thr197 bears the Phosphothreonine mark. Residues 226–237 (ARSNCKCSGSRQ) are compositionally biased toward polar residues. Phosphoserine occurs at positions 256, 259, 281, 286, 293, 297, and 311. Positions 275–284 (KLTGQESSLG) are enriched in polar residues. Over residues 311-325 (SEADEETSPVFDEQD) the composition is skewed to acidic residues. Composition is skewed to polar residues over residues 329 to 339 (SQTANKLSSCQ) and 369 to 387 (NAGTSDLNAKPSGNSSSLN). Residue Lys334 is modified to N6-acetyllysine. The catalytic stretch occupies residues 603-788 (QPIPLLKQKM…TEQYSEYTGY (186 aa)). 719-720 (IE) is a binding site for substrate. Residue Asp730 is part of the active site. 2 residues coordinate substrate: Asn733 and Gln747. Residues Glu748 and Glu749 contribute to the active site. Substrate contacts are provided by residues Tyr788 and 862–867 (NWGCGA).

It belongs to the poly(ADP-ribose) glycohydrolase family. As to quaternary structure, interacts with PCNA. Interacts with NUDT5.

It is found in the nucleus. It carries out the reaction [(1''-&gt;2')-ADP-alpha-D-ribose](n) + H2O = [(1''-&gt;2')-ADP-alpha-D-ribose](n-1) + ADP-D-ribose. Poly(ADP-ribose) glycohydrolase that degrades poly(ADP-ribose) by hydrolyzing the ribose-ribose bonds present in poly(ADP-ribose). PARG acts both as an endo- and exoglycosidase, releasing poly(ADP-ribose) of different length as well as ADP-ribose monomers. It is however unable to cleave the ester bond between the terminal ADP-ribose and ADP-ribosylated residues, leaving proteins that are mono-ADP-ribosylated. Poly(ADP-ribose) is synthesized after DNA damage is only present transiently and is rapidly degraded by PARG. Required to prevent detrimental accumulation of poly(ADP-ribose) upon prolonged replicative stress, while it is not required for recovery from transient replicative stress. Responsible for the prevalence of mono-ADP-ribosylated proteins in cells, thanks to its ability to degrade poly(ADP-ribose) without cleaving the terminal protein-ribose bond. Required for retinoid acid-dependent gene transactivation, probably by removing poly(ADP-ribose) from histone demethylase KDM4D, allowing chromatin derepression at RAR-dependent gene promoters. Involved in the synthesis of ATP in the nucleus, together with PARP1, NMNAT1 and NUDT5. Nuclear ATP generation is required for extensive chromatin remodeling events that are energy-consuming. The sequence is that of Poly(ADP-ribose) glycohydrolase from Mus musculus (Mouse).